A 156-amino-acid polypeptide reads, in one-letter code: Transcription antitermination protein NusB (156 aa).

The protein belongs to the NusB family.

Its function is as follows. Involved in transcription antitermination. Required for transcription of ribosomal RNA (rRNA) genes. Binds specifically to the boxA antiterminator sequence of the ribosomal RNA (rrn) operons. In Bartonella quintana (strain Toulouse) (Rochalimaea quintana), this protein is Transcription antitermination protein NusB.